Reading from the N-terminus, the 349-residue chain is Phosphoribosylformylglycinamidine cyclo-ligase (349 aa).

It belongs to the AIR synthase family.

Its subcellular location is the cytoplasm. The enzyme catalyses 2-formamido-N(1)-(5-O-phospho-beta-D-ribosyl)acetamidine + ATP = 5-amino-1-(5-phospho-beta-D-ribosyl)imidazole + ADP + phosphate + H(+). The protein operates within purine metabolism; IMP biosynthesis via de novo pathway; 5-amino-1-(5-phospho-D-ribosyl)imidazole from N(2)-formyl-N(1)-(5-phospho-D-ribosyl)glycinamide: step 2/2. This Methanococcus maripaludis (strain C6 / ATCC BAA-1332) protein is Phosphoribosylformylglycinamidine cyclo-ligase.